A 152-amino-acid polypeptide reads, in one-letter code: Photosystem II extrinsic protein U, chloroplastic (152 aa).

The transit peptide at 1 to 35 (MDSTAFVGAAAPLRVAAAARSTICMAAADDKPVVS) directs the protein to the chloroplast. Residues 36–59 (RRAALTGAAAAALAAVAGSLPALA) constitute a thylakoid transit peptide.

This sequence belongs to the PsbU family. As to quaternary structure, PSII is composed of 1 copy each of membrane proteins PsbA, PsbB, PsbC, PsbD, PsbE, PsbF, PsbH, PsbI, PsbJ, PsbK, PsbL, PsbM, PsbT, PsbX, PsbY, PsbZ, Psb30/Ycf12, at least 3 peripheral proteins of the oxygen-evolving complex and a large number of cofactors. It forms dimeric complexes. The oxygen-evolving complex in red algae is composed of PsbO (OEC33), PsbQ', cytochrome c-550 and PsbU. In terms of processing, predicted to be translocated into the thylakoid lumen by the Tat system.

Its subcellular location is the plastid. It is found in the chloroplast thylakoid membrane. Functionally, one of the extrinsic, lumenal subunits of photosystem II (PSII). PSII is a light-driven water plastoquinone oxidoreductase, using light energy to abstract electrons from H(2)O, generating a proton gradient subsequently used for ATP formation. The extrinsic proteins stabilize the structure of photosystem II oxygen-evolving complex (OEC), the ion environment of oxygen evolution and protect the OEC against heat-induced inactivation. This chain is Photosystem II extrinsic protein U, chloroplastic, found in Pyropia yezoensis (Susabi-nori).